A 200-amino-acid chain; its full sequence is Holliday junction branch migration complex subunit RuvA (200 aa).

The interval 1-63 (MIAFVRGQVA…EDSLTLFGFA (63 aa)) is domain I. The tract at residues 64–142 (DEDEKQTFEL…APTGAGRSAG (79 aa)) is domain II. Positions 142-146 (GVPAP) are flexible linker. Residues 147-200 (AGAVWRDQVHQGLVGLGWPVRDAEKAVAAVAPEAGDVPDVAALLRAALRTLSKA) are domain III.

This sequence belongs to the RuvA family. Homotetramer. Forms an RuvA(8)-RuvB(12)-Holliday junction (HJ) complex. HJ DNA is sandwiched between 2 RuvA tetramers; dsDNA enters through RuvA and exits via RuvB. An RuvB hexamer assembles on each DNA strand where it exits the tetramer. Each RuvB hexamer is contacted by two RuvA subunits (via domain III) on 2 adjacent RuvB subunits; this complex drives branch migration. In the full resolvosome a probable DNA-RuvA(4)-RuvB(12)-RuvC(2) complex forms which resolves the HJ.

It is found in the cytoplasm. In terms of biological role, the RuvA-RuvB-RuvC complex processes Holliday junction (HJ) DNA during genetic recombination and DNA repair, while the RuvA-RuvB complex plays an important role in the rescue of blocked DNA replication forks via replication fork reversal (RFR). RuvA specifically binds to HJ cruciform DNA, conferring on it an open structure. The RuvB hexamer acts as an ATP-dependent pump, pulling dsDNA into and through the RuvAB complex. HJ branch migration allows RuvC to scan DNA until it finds its consensus sequence, where it cleaves and resolves the cruciform DNA. In Nocardioides sp. (strain ATCC BAA-499 / JS614), this protein is Holliday junction branch migration complex subunit RuvA.